The primary structure comprises 620 residues: Chaperone protein HscA homolog (620 aa).

Belongs to the heat shock protein 70 family.

Functionally, chaperone involved in the maturation of iron-sulfur cluster-containing proteins. Has a low intrinsic ATPase activity which is markedly stimulated by HscB. This chain is Chaperone protein HscA homolog, found in Shewanella baltica (strain OS155 / ATCC BAA-1091).